Here is a 259-residue protein sequence, read N- to C-terminus: 5'-nucleotidase SurE (259 aa).

A divalent metal cation is bound by residues D8, D9, S40, and N92.

Belongs to the SurE nucleotidase family. The cofactor is a divalent metal cation.

The protein resides in the cytoplasm. The catalysed reaction is a ribonucleoside 5'-phosphate + H2O = a ribonucleoside + phosphate. Its function is as follows. Nucleotidase that shows phosphatase activity on nucleoside 5'-monophosphates. This chain is 5'-nucleotidase SurE, found in Stenotrophomonas maltophilia (strain R551-3).